The following is a 401-amino-acid chain: O-methyltransferase SAT18 (401 aa).

D249 is an S-adenosyl-L-methionine binding site. The Proton acceptor role is filled by H300.

The protein belongs to the class I-like SAM-binding methyltransferase superfamily. Cation-independent O-methyltransferase family.

Its pathway is mycotoxin biosynthesis. In terms of biological role, O-methyltransferase; part of the satratoxin SC3 cluster involved in the biosynthesis of satratoxins, trichothecene mycotoxins that are associated with human food poisonings. Satratoxins are suggested to be made by products of multiple gene clusters (SC1, SC2 and SC3) that encode 21 proteins in all, including polyketide synthases, acetyltransferases, and other enzymes expected to modify the trichothecene skeleton. SC1 encodes 10 proteins, SAT1 to SAT10. The largest are SAT8, which encodes a putative polyketide synthase (PKS) with a conventional non-reducing architecture, and SAT10, a putative protein containing four ankyrin repeats and thus may be involved in protein scaffolding. The putative short-chain reductase SAT3 may assist the PKS in some capacity. SAT6 contains a secretory lipase domain and acts probably as a trichothecene esterase. SAT5 encodes a putative acetyltransferase, and so, with SAT6, may affect endogenous protection from toxicity. The probable transcription factor SAT9 may regulate the expression of the SC1 cluster. SC2 encodes proteins SAT11 to SAT16, the largest of which encodes the putative reducing PKS SAT13. SAT11 is a cytochrome P450 monooxygenase, while SAT14 and SAT16 are probable acetyltransferases. The SC2 cluster may be regulated by the transcription factor SAT15. SC3 is a small cluster that encodes 5 proteins, SAT17 to SAT21. SAT21 is a putative MFS-type transporter which may have a role in exporting secondary metabolites. The four other proteins putatively encoded in SC3 include the taurine hydroxylase-like protein SAT17, the O-methyltransferase SAT18, the acetyltransferase SAT19, and the Cys6-type zinc finger SAT20, the latter being probably involved in regulation of SC3 expression. The sequence is that of O-methyltransferase SAT18 from Stachybotrys chartarum (strain CBS 109288 / IBT 7711) (Toxic black mold).